A 230-amino-acid polypeptide reads, in one-letter code: RING finger protein 141 (230 aa).

The RING-type zinc finger occupies 154–191 (ECCICMDGRVDLILPCAHSFCQKCIDKWSDRHRSCPVC).

This is RING finger protein 141 (RNF141) from Gallus gallus (Chicken).